The chain runs to 1826 residues: 1,3-beta-glucan synthase component bgs3 (1826 aa).

A compositionally biased stretch (polar residues) spans 34–43 (QSNDQYNNIQ). Residues 34 to 90 (QSNDQYNNIQHPAPSFANPFIHEQDDSYSDILEEEPDEDAYDSPERPSSTEEFISQD) form a disordered region. A compositionally biased stretch (acidic residues) spans 59-75 (DSYSDILEEEPDEDAYD). 7 helical membrane-spanning segments follow: residues 427-447 (IWIL…PTIY), 465-485 (WCAP…ALIL), 504-524 (LIFV…IFGF), 543-563 (FFFS…FLLG), 597-617 (AALW…FLTL), 637-657 (FMIG…LVYL), and 660-680 (LVLF…MFSI). Phosphoserine is present on S885. Helical transmembrane passes span 1272–1292 (VFIM…GAMY), 1329–1349 (IISI…HDLL), 1375–1397 (VTQN…YIAT), 1417–1437 (GSSI…TMTV), 1438–1458 (WTTH…CPFI), 1531–1551 (IFTE…AYTF), 1571–1591 (IWIM…ILLM), 1607–1627 (YGAV…VFTF), 1642–1662 (VLGC…VVVF), 1701–1721 (CKVV…CILF), and 1770–1790 (SLLF…PLVL).

The protein belongs to the glycosyltransferase 48 family. Component of the 1,3-beta-glucan synthase (GS) complex, composed of at least the alternate catalytic subunits bgs1, bgs2, bgs3, and bgs4, and a regulatory subunit chr4.

The protein resides in the membrane. The catalysed reaction is [(1-&gt;3)-beta-D-glucosyl](n) + UDP-alpha-D-glucose = [(1-&gt;3)-beta-D-glucosyl](n+1) + UDP + H(+). Functionally, alternate catalytic subunit of the 1,3-beta-glucan synthase (GS) complex. Synthesizes 1,3-beta-glucan, a major structural component of the yeast cell wall. Required for cell wall biosynthesis and cell elongation. This is 1,3-beta-glucan synthase component bgs3 from Schizosaccharomyces pombe (strain 972 / ATCC 24843) (Fission yeast).